Here is a 502-residue protein sequence, read N- to C-terminus: MSIKAEEISALIKQQIQNYQSEIEVKDVGTVIQVGDGIARVHGLDNIMAGELVEFSNGVMGMAQNLEESNVGIVILGPYKDIREGDDVKRTGRIMEVPVGEELIGRIVNPLGQPVDGLGPILTSKTRPIESEAPGVMDRKSVHEPLQTGIKAIDALIPIGRGQRELIIGDRQTGKTSVAIDTILNQKDQDMICIYVAIGQKESTVRGVVETLRKHGALDYTIVVTASASQPAPLLYLAPYAGVTMGEEFMYNGKHVLVVYDDLSKQAAAYRELSLLLRRPPGREAFPGDVFYLHSRLLERAAKLSDAKGGGSITALPFVETQAGDISAYIPTNVISITDGQIFLQSDLFFSGVRPAVNAGLSVSRVGGSAQIKAMKKVAGTLRLDLASYRELEAFAQFGSDLDQATQAKLNRGARTVEVLKQDLNKPLKVEKQVAILYALTRGYLDDVAVADVKRFEAELFMYIEENHKGLFDTISQTGNMPADEEWNTAIEGFKRTFAPSN.

ATP is bound at residue 169–176; sequence GDRQTGKT.

It belongs to the ATPase alpha/beta chains family. As to quaternary structure, F-type ATPases have 2 components, CF(1) - the catalytic core - and CF(0) - the membrane proton channel. CF(1) has five subunits: alpha(3), beta(3), gamma(1), delta(1), epsilon(1). CF(0) has three main subunits: a(1), b(2) and c(9-12). The alpha and beta chains form an alternating ring which encloses part of the gamma chain. CF(1) is attached to CF(0) by a central stalk formed by the gamma and epsilon chains, while a peripheral stalk is formed by the delta and b chains.

It is found in the cell membrane. The enzyme catalyses ATP + H2O + 4 H(+)(in) = ADP + phosphate + 5 H(+)(out). Produces ATP from ADP in the presence of a proton gradient across the membrane. The alpha chain is a regulatory subunit. This is ATP synthase subunit alpha from Bacillus pumilus (strain SAFR-032).